A 281-amino-acid polypeptide reads, in one-letter code: Lectin alpha chain (281 aa).

3 N-linked (GlcNAc...) asparagine glycosylation sites follow: N35, N82, and N140.

Belongs to the leguminous lectin family. In terms of assembly, tetramer of 2 alpha and 2 beta chains. Glycosylated. In terms of processing, the beta chain is produced by partial proteolytic processing of the alpha chain.

In terms of biological role, D-galactose-binding lectin. The protein is Lectin alpha chain of Lablab purpureus (Hyacinth bean).